We begin with the raw amino-acid sequence, 295 residues long: Probable palmitoyltransferase ZDHHC24 (295 aa).

The Cytoplasmic portion of the chain corresponds to 1–20 (MTSFMSRVWCKVESTGRQLP). The chain crosses the membrane as a helical span at residues 21 to 41 (IVLNAVLVFSITAEVSYLVLV). Over 42–60 (EAPFEPEQKKTDWSTIWTG) the chain is Extracellular. The chain crosses the membrane as a helical span at residues 61–81 (LHLFAQYFMLGNITWNASLFV). The Cytoplasmic portion of the chain corresponds to 82–151 (KTNPSIRGVF…HNYRYFLTCL (70 aa)). A DHHC domain is found at 102–152 (RYCYNCETHTPPRCSHCYDCNVCVLRRDHHCVFFGQCVGFHNYRYFLTCLL). Catalysis depends on Cys132, which acts as the S-palmitoyl cysteine intermediate. A helical membrane pass occupies residues 152-172 (LFMWAGLLYAVVMNAEVFIFI). Topologically, residues 173–176 (LKEG) are extracellular. A helical membrane pass occupies residues 177 to 197 (VTFHSVMLLLVPWIMLVSGQV). Residues 198 to 203 (TTRAFA) are Cytoplasmic-facing. The chain crosses the membrane as a helical span at residues 204–224 (FAFIADTCVVGFLLVAAFLFF). The Extracellular portion of the chain corresponds to 225–295 (HVALMLRGQT…SLEPKKQAVH (71 aa)).

The protein belongs to the DHHC palmitoyltransferase family.

It is found in the membrane. It catalyses the reaction L-cysteinyl-[protein] + hexadecanoyl-CoA = S-hexadecanoyl-L-cysteinyl-[protein] + CoA. Probable palmitoyltransferase that could catalyze the addition of palmitate onto various protein substrates. The chain is Probable palmitoyltransferase ZDHHC24 from Danio rerio (Zebrafish).